Consider the following 254-residue polypeptide: MALLQWMLENISDDNSIKMSLEEQHETFQINVKWLKFLNLSDSDIVQLQNVYKLVQRDRERLIIYPDPQNVHSWSYLCSPEEIKVIIVGQDPYPDGRGHGLAFSTVRGCSPPNSLKTIFAELERTIENFKAPAHGSLKSWCAQGVLLLNTVFTVIRGVPMSHEAIGWQVLSNRIINQLSEKMQNLVFMLWGSQARKLVSLIDSKKHLILECAHPSPRTKGSKTPFIGCGHFLKANKYLQIHNKCPIDWNITNDL.

Asp91 (proton acceptor) is an active-site residue.

This sequence belongs to the uracil-DNA glycosylase (UDG) superfamily. UNG family.

The protein resides in the host nucleus. It catalyses the reaction Hydrolyzes single-stranded DNA or mismatched double-stranded DNA and polynucleotides, releasing free uracil.. Excises uracil residues from the DNA which can arise as a result of misincorporation of dUMP residues by DNA polymerase or deamination of cytosines. Therefore may reduce deleterious uracil incorporation into the viral genome, particularly in terminally differentiated cells which lack DNA repair enzymes. The chain is Uracil-DNA glycosylase (U81) from Homo sapiens (Human).